The following is a 370-amino-acid chain: L-lysine 4-hydroxylase (370 aa).

Residues histidine 176, glutamate 178, and histidine 310 each coordinate Fe cation.

This sequence belongs to the clavaminate synthase family. The cofactor is Fe(2+).

It catalyses the reaction L-lysine + 2-oxoglutarate + O2 = (4R)-4-hydroxy-L-lysine + succinate + CO2. Its function is as follows. Alpha-ketoglutarate-dependent dioxygenase that in vitro catalyzes the regio- and stereoselective hydroxylation of L-lysine, leading to (4R)-4-hydroxy-L-lysine. To a lesser extent, can also use (3S)-3-hydroxy-L-lysine as substrate, producing the dihydroxylated product (3R,4R)-3,4-hydroxy-L-lysine. Cannot use D-lysine or L-ornithine as substrate. The protein is L-lysine 4-hydroxylase of Flavobacterium johnsoniae (strain ATCC 17061 / DSM 2064 / JCM 8514 / BCRC 14874 / CCUG 350202 / NBRC 14942 / NCIMB 11054 / UW101) (Cytophaga johnsonae).